The sequence spans 344 residues: MTNFYKVFLAVFILVCCNISQAAVSFIGSTENDVGPSPGSYSRTHAMDNLPFVYNTGNNIGYQNANVWRISKGFCVGLDGKVDLPVVGSLDGQSIYGLTEEVGLLIWMGDTNYSRGTAMSGNSWENVFSGWCVGANTASTQGLSVRVTPVILKRNSSARYSVQKTSIGSIRMRPYNGSSAGSVQTTVNFSLNPFTLNDTVTSCRLLTPSAVNVSLAAISAGQLPSSGDEVVAGTTSLKLQCDAGVTVWATLTDATTPSNRSDILTLTGASTATGVGLRIYKNTDSTPLKFGPDSPVKGNENQWQLSTGTETSPSVRLYVKYVNTGEGINPGTVNGISTFTFSYQ.

Positions 1–22 (MTNFYKVFLAVFILVCCNISQA) are cleaved as a signal peptide. Positions 23–199 (AVSFIGSTEN…SLNPFTLNDT (177 aa)) are receptor-binding lectin domain. Residues 65-66 (AN), 110-111 (DT), and 139-142 (STQG) each bind a carbohydrate. Residues Cys75 and Cys132 are joined by a disulfide bond. The segment at 200-344 (VTSCRLLTPS…GISTFTFSYQ (145 aa)) is fimbrillin-binding domain. Positions 288–308 (LKFGPDSPVKGNENQWQLSTG) are disordered. The segment covering 299–308 (NENQWQLSTG) has biased composition (polar residues).

The protein belongs to the fimbrial protein family.

Its subcellular location is the fimbrium. Its function is as follows. Essential fimbrial adhesion factor that mediates binding to N-acetylglucosamine-containing receptors in the host intestinal microvilli, leading to colonization of the intestinal tissue, and diarrhea or septicemia. Also confers adhesiveness to laminin and basement membranes. The protein is F17d-G fimbrial adhesin (f17dG) of Escherichia coli.